Consider the following 331-residue polypeptide: UBX domain-containing protein 2B (331 aa).

Composition is skewed to basic and acidic residues over residues 1–16 (MAEG…ERGS) and 37–48 (DEMKCKSSKPDR). The tract at residues 1–70 (MAEGGRAEPE…PHRLYSGDHK (70 aa)) is disordered. Ala2 bears the N-acetylalanine mark. Ser56 is subject to Phosphoserine. The residue at position 59 (Thr59) is a Phosphothreonine. Phosphoserine is present on Ser66. The SEP domain occupies 141–206 (DVQVLLKLWR…MEDHQDQEYI (66 aa)). Phosphoserine occurs at positions 231, 234, and 235. One can recognise a UBX domain in the interval 252–329 (DSMPTTKIQI…DILNTVILQQ (78 aa)).

The protein belongs to the NSFL1C family. In terms of assembly, interacts with VCP. Does not bind ubiquitin.

It localises to the nucleus. It is found in the cytoplasm. Its subcellular location is the cytosol. The protein localises to the endoplasmic reticulum. The protein resides in the golgi apparatus. It localises to the cytoskeleton. It is found in the microtubule organizing center. Its subcellular location is the centrosome. Adapter protein required for Golgi and endoplasmic reticulum biogenesis. Involved in Golgi and endoplasmic reticulum maintenance during interphase and in their reassembly at the end of mitosis. The complex formed with VCP has membrane fusion activity; membrane fusion activity requires USO1-GOLGA2 tethering and BET1L. VCPIP1 is also required, but not its deubiquitinating activity. Together with NSFL1C/p47, regulates the centrosomal levels of kinase AURKA/Aurora A during mitotic progression by promoting AURKA removal from centrosomes in prophase. Also, regulates spindle orientation during mitosis. This Mus musculus (Mouse) protein is UBX domain-containing protein 2B (Ubxn2b).